Consider the following 120-residue polypeptide: Large ribosomal subunit protein uL18 (120 aa).

The protein belongs to the universal ribosomal protein uL18 family. In terms of assembly, part of the 50S ribosomal subunit; part of the 5S rRNA/L5/L18/L25 subcomplex. Contacts the 5S and 23S rRNAs.

Its function is as follows. This is one of the proteins that bind and probably mediate the attachment of the 5S RNA into the large ribosomal subunit, where it forms part of the central protuberance. In Rhizobium leguminosarum bv. trifolii (strain WSM2304), this protein is Large ribosomal subunit protein uL18.